The sequence spans 364 residues: DNA replication and repair protein RecF (364 aa).

23–30 is a binding site for ATP; it reads GPNGIGKS.

Belongs to the RecF family.

It localises to the cytoplasm. In terms of biological role, the RecF protein is involved in DNA metabolism; it is required for DNA replication and normal SOS inducibility. RecF binds preferentially to single-stranded, linear DNA. It also seems to bind ATP. This Synechococcus sp. (strain CC9605) protein is DNA replication and repair protein RecF.